Here is a 126-residue protein sequence, read N- to C-terminus: Large-conductance mechanosensitive channel (126 aa).

3 helical membrane-spanning segments follow: residues 14-34, 40-60, and 67-87; these read VIDL…VTSL, MPLL…FTFV, and GLFI…FLFI.

The protein belongs to the MscL family. As to quaternary structure, homopentamer.

The protein localises to the cell membrane. Its function is as follows. Channel that opens in response to stretch forces in the membrane lipid bilayer. May participate in the regulation of osmotic pressure changes within the cell. The sequence is that of Large-conductance mechanosensitive channel from Bacillus licheniformis (strain ATCC 14580 / DSM 13 / JCM 2505 / CCUG 7422 / NBRC 12200 / NCIMB 9375 / NCTC 10341 / NRRL NRS-1264 / Gibson 46).